The primary structure comprises 202 residues: Small ribosomal subunit protein uS4 (202 aa).

An S4 RNA-binding domain is found at 94–157 (SRLDSLVYRA…LEMPLIKNTL (64 aa)).

The protein belongs to the universal ribosomal protein uS4 family. As to quaternary structure, part of the 30S ribosomal subunit. Contacts protein S5. The interaction surface between S4 and S5 is involved in control of translational fidelity.

Its function is as follows. One of the primary rRNA binding proteins, it binds directly to 16S rRNA where it nucleates assembly of the body of the 30S subunit. In terms of biological role, with S5 and S12 plays an important role in translational accuracy. The sequence is that of Small ribosomal subunit protein uS4 from Ureaplasma urealyticum serovar 10 (strain ATCC 33699 / Western).